The chain runs to 152 residues: Ribosome maturation factor RimP (152 aa).

This sequence belongs to the RimP family.

It localises to the cytoplasm. Its function is as follows. Required for maturation of 30S ribosomal subunits. This is Ribosome maturation factor RimP from Yersinia enterocolitica serotype O:8 / biotype 1B (strain NCTC 13174 / 8081).